Reading from the N-terminus, the 484-residue chain is Glutamyl-tRNA(Gln) amidotransferase subunit A (484 aa).

Active-site charge relay system residues include Lys76 and Ser151. Ser175 functions as the Acyl-ester intermediate in the catalytic mechanism.

It belongs to the amidase family. GatA subfamily. As to quaternary structure, heterotrimer of A, B and C subunits.

The catalysed reaction is L-glutamyl-tRNA(Gln) + L-glutamine + ATP + H2O = L-glutaminyl-tRNA(Gln) + L-glutamate + ADP + phosphate + H(+). Functionally, allows the formation of correctly charged Gln-tRNA(Gln) through the transamidation of misacylated Glu-tRNA(Gln) in organisms which lack glutaminyl-tRNA synthetase. The reaction takes place in the presence of glutamine and ATP through an activated gamma-phospho-Glu-tRNA(Gln). The sequence is that of Glutamyl-tRNA(Gln) amidotransferase subunit A from Thioalkalivibrio sulfidiphilus (strain HL-EbGR7).